Here is a 586-residue protein sequence, read N- to C-terminus: Arginine--tRNA ligase (586 aa).

Positions 128–138 match the 'HIGH' region motif; sequence ANPTGPLHVGH.

This sequence belongs to the class-I aminoacyl-tRNA synthetase family. In terms of assembly, monomer.

Its subcellular location is the cytoplasm. The catalysed reaction is tRNA(Arg) + L-arginine + ATP = L-arginyl-tRNA(Arg) + AMP + diphosphate. The chain is Arginine--tRNA ligase from Coxiella burnetii (strain RSA 331 / Henzerling II).